The chain runs to 239 residues: UDP-2,3-diacylglucosamine hydrolase (239 aa).

Residues D8, H10, D41, N78, and H113 each contribute to the Mn(2+) site. 78–79 (NR) contributes to the substrate binding site. Substrate contacts are provided by D121, S159, N163, K166, and H194. H194 and H196 together coordinate Mn(2+).

Belongs to the LpxH family. Mn(2+) is required as a cofactor.

It localises to the cell inner membrane. It carries out the reaction UDP-2-N,3-O-bis[(3R)-3-hydroxytetradecanoyl]-alpha-D-glucosamine + H2O = 2-N,3-O-bis[(3R)-3-hydroxytetradecanoyl]-alpha-D-glucosaminyl 1-phosphate + UMP + 2 H(+). The protein operates within glycolipid biosynthesis; lipid IV(A) biosynthesis; lipid IV(A) from (3R)-3-hydroxytetradecanoyl-[acyl-carrier-protein] and UDP-N-acetyl-alpha-D-glucosamine: step 4/6. Its function is as follows. Hydrolyzes the pyrophosphate bond of UDP-2,3-diacylglucosamine to yield 2,3-diacylglucosamine 1-phosphate (lipid X) and UMP by catalyzing the attack of water at the alpha-P atom. Involved in the biosynthesis of lipid A, a phosphorylated glycolipid that anchors the lipopolysaccharide to the outer membrane of the cell. This is UDP-2,3-diacylglucosamine hydrolase from Shewanella sp. (strain MR-7).